The primary structure comprises 359 residues: B-cell differentiation antigen CD72 (359 aa).

At 1–95 the chain is on the cytoplasmic side; that stretch reads MAEAITYADL…LPCRTTCLRY (95 aa). Tyrosine 7 and tyrosine 39 each carry phosphotyrosine; by LYN. The helical; Signal-anchor for type II membrane protein transmembrane segment at 96–116 threads the bilayer; that stretch reads LLLGLLLTCLLLGVTAICLGV. The Extracellular portion of the chain corresponds to 117 to 359; that stretch reads RYLQVSQQLQ…CEMTAFRFPD (243 aa). An N-linked (GlcNAc...) asparagine glycan is attached at asparagine 136. Residues 232 to 352 enclose the C-type lectin domain; sequence CCPSGWIMHQ…RSSLPYICEM (121 aa). Intrachain disulfides connect cysteine 233–cysteine 244, cysteine 261–cysteine 350, and cysteine 325–cysteine 342.

Homodimer; disulfide-linked. Associates with CD5. Interacts (tyrosine phosphorylated) with PTPN6/SHP-1. In terms of processing, phosphorylated upon engagement of the B-cell receptor, probably by LYN or SYK. Phosphorylation at Tyr-7 is important for interaction with PTPN6/SHP-1. Pre-B-cells and B-cells but not terminally differentiated plasma cells.

Its subcellular location is the membrane. Functionally, co-receptor of B cell receptor (BCR) that plays both positive and negative roles on B-cell functions. Recognizes the Sm/ribonucleoprotein (RNP) self-antigen ligand, and coligation of CD72 and BCR inhibits BCR signaling. Mechanistically, ligand binding leads to the recruitment of PTPN6/SHP-1 to the BCR complex which is inhibitory to BCR signaling. Also acts as a ligand for CD5 and thereby plays a critical role in maintaining regulatory T and B-cell homeostasis. The chain is B-cell differentiation antigen CD72 (CD72) from Homo sapiens (Human).